Consider the following 336-residue polypeptide: Probable allantoicase (336 aa).

It belongs to the allantoicase family.

The enzyme catalyses allantoate + H2O = (S)-ureidoglycolate + urea. The protein operates within nitrogen metabolism; (S)-allantoin degradation; (S)-ureidoglycolate from allantoate (aminidohydrolase route): step 1/1. This chain is Probable allantoicase, found in Acinetobacter baumannii (strain AYE).